Reading from the N-terminus, the 306-residue chain is Cilia- and flagella-associated protein 73 (306 aa).

2 coiled-coil regions span residues 49–139 (LQAQ…QRLE) and 197–231 (QSEK…WESK).

This sequence belongs to the CFAP73 family.

It is found in the cytoplasm. Its subcellular location is the cytoskeleton. The protein localises to the cilium axoneme. May play a role in ciliary/flagellar motility by regulating the assembly and the activity of axonemal inner dynein arm. This chain is Cilia- and flagella-associated protein 73, found in Mus musculus (Mouse).